Here is a 645-residue protein sequence, read N- to C-terminus: Aminopeptidase P1 (645 aa).

S2 is modified (N-acetylserine). Positions 69 and 420 each coordinate a peptide. The Mn(2+) site is built by D440, D451, and H514. Residues H514, H523, and E549 each contribute to the a peptide site. Mn(2+) is bound by residues E549 and E563.

This sequence belongs to the peptidase M24B family. Homodimer. Interacts with N-1-naphthylphthalamic acid (NPA). Mn(2+) is required as a cofactor. Requires Zn(2+) as cofactor. In terms of processing, glycosylated. Also present in a non-glycosylated form. As to expression, ubiquitous with preferential expression in 5 days-old seedlings, roots, flowers, inflorescences and rosette leaves (at protein levels).

The protein localises to the cytoplasm. It is found in the cell membrane. Its subcellular location is the microsome membrane. The enzyme catalyses Release of any N-terminal amino acid, including proline, that is linked to proline, even from a dipeptide or tripeptide.. With respect to regulation, inhibited by EGTA and apstatin, and, to some extent, by the flavonoid kaempferol. Functionally, catalyzes the removal of a penultimate prolyl residue from the N-termini of peptides, such as Arg-Pro-Pro. Aminopeptidase that binds to the auxin transport inhibitor N-1-naphthylphthalamic acid (NPA). May play a negative role in the regulation of PIN auxin transport proteins. This chain is Aminopeptidase P1, found in Arabidopsis thaliana (Mouse-ear cress).